Reading from the N-terminus, the 341-residue chain is Phosphate acyltransferase (341 aa).

Belongs to the PlsX family. Homodimer. Probably interacts with PlsY.

It is found in the cytoplasm. The enzyme catalyses a fatty acyl-[ACP] + phosphate = an acyl phosphate + holo-[ACP]. It participates in lipid metabolism; phospholipid metabolism. Its function is as follows. Catalyzes the reversible formation of acyl-phosphate (acyl-PO(4)) from acyl-[acyl-carrier-protein] (acyl-ACP). This enzyme utilizes acyl-ACP as fatty acyl donor, but not acyl-CoA. The polypeptide is Phosphate acyltransferase (Lacticaseibacillus casei (strain BL23) (Lactobacillus casei)).